A 425-amino-acid chain; its full sequence is NAD kinase 2, mitochondrial (425 aa).

The N-terminal 45 residues, 1–45, are a transit peptide targeting the mitochondrion; the sequence is MDTSAIQQTLVKIYQRQAWQPPRKASKNETTVGKPRELAGGGSPA. The interval 20–46 is disordered; sequence QPPRKASKNETTVGKPRELAGGGSPAD. Lys-59 carries the N6-acetyllysine; alternate modification. Position 59 is an N6-succinyllysine; alternate (Lys-59). Phosphoserine is present on Ser-171. Lys-285 carries the post-translational modification N6-succinyllysine. Position 300 is an N6-acetyllysine; alternate (Lys-300). Lys-300 is modified (N6-succinyllysine; alternate). Ser-350 carries the post-translational modification Phosphoserine. At Lys-380 the chain carries N6-acetyllysine.

It belongs to the NAD kinase family. In terms of assembly, homodimer.

Its subcellular location is the mitochondrion. It carries out the reaction NAD(+) + ATP = ADP + NADP(+) + H(+). Its activity is regulated as follows. Inhibited by NADH, NADPH and NADP(+). Mitochondrial NAD(+) kinase that phosphorylates NAD(+) to yield NADP(+). Can use both ATP or inorganic polyphosphate as the phosphoryl donor. This is NAD kinase 2, mitochondrial (Nadk2) from Rattus norvegicus (Rat).